The sequence spans 604 residues: Pescadillo homolog (604 aa).

The segment at 275–299 (NSEPAGLIEDKEGEDNKESSKTDES) is disordered. Residues 282-299 (IEDKEGEDNKESSKTDES) are compositionally biased toward basic and acidic residues. Residues 337 to 427 (ECRSLFKNLK…IILPTEGYIV (91 aa)) form the BRCT domain. Disordered regions lie at residues 518 to 557 (KTFS…DAAD) and 574 to 604 (IEIN…AKGR). Basic and acidic residues-rich tracts occupy residues 531–557 (VVDK…DAAD) and 577–586 (NQERKKDKVN).

Belongs to the pescadillo family.

The protein localises to the nucleus. It is found in the nucleolus. Its subcellular location is the nucleoplasm. In terms of biological role, required for maturation of ribosomal RNAs and formation of the large ribosomal subunit. This Oryza sativa subsp. japonica (Rice) protein is Pescadillo homolog (PES).